Reading from the N-terminus, the 405-residue chain is S-adenosylmethionine synthase (405 aa).

An ATP-binding site is contributed by G141–D146.

The protein belongs to the AdoMet synthase 2 family. It depends on Mg(2+) as a cofactor.

It catalyses the reaction L-methionine + ATP + H2O = S-adenosyl-L-methionine + phosphate + diphosphate. The protein operates within amino-acid biosynthesis; S-adenosyl-L-methionine biosynthesis; S-adenosyl-L-methionine from L-methionine: step 1/1. Functionally, catalyzes the formation of S-adenosylmethionine from methionine and ATP. In Methanococcus maripaludis (strain C7 / ATCC BAA-1331), this protein is S-adenosylmethionine synthase.